We begin with the raw amino-acid sequence, 553 residues long: Interleukin-20 receptor subunit alpha (553 aa).

Residues 1-29 form the signal peptide; the sequence is MRAPGRPALRPLPLPPLLLLLLAAPWGRA. Residues 30 to 250 lie on the Extracellular side of the membrane; it reads VPCVSGGLPK…KDQSSEFKAK (221 aa). Fibronectin type-III domains follow at residues 37-135 and 136-242; these read LPKP…FLET and QIGP…TLKD. N-linked (GlcNAc...) asparagine glycosylation is found at Asn-42, Asn-83, Asn-91, Asn-182, Asn-191, and Asn-200. The cysteines at positions 87 and 95 are disulfide-linked. A disulfide bridge connects residues Cys-215 and Cys-236. Residues 251 to 271 traverse the membrane as a helical segment; sequence IIFWYVLPVSITVFLFSVMGY. At 272-553 the chain is on the cytoplasmic side; it reads SIYRYIHVGK…EWGLYVQMEN (282 aa). Disordered regions lie at residues 333–353 and 462–515; these read SSDVSSLNDPQPSGNLRPPQE and QEHT…LGEE. The segment covering 334–346 has biased composition (polar residues); sequence SDVSSLNDPQPSG. A compositionally biased stretch (acidic residues) spans 499-513; sequence QDSEGCEPSEGDGLG.

The protein belongs to the type II cytokine receptor family. Heterodimer with IL20RB and heterodimer with IL10RB. Widely expressed with highest levels in skin and testis and high levels in brain. Highly expressed in psoriatic skin.

Its subcellular location is the membrane. Functionally, the IL20RA/IL20RB dimer is a receptor for IL19, IL20 and IL24. The IL20RA/IL10RB dimer is a receptor for IL26. The protein is Interleukin-20 receptor subunit alpha (IL20RA) of Homo sapiens (Human).